A 483-amino-acid polypeptide reads, in one-letter code: ATP-dependent RNA helicase DDX25 (483 aa).

The residue at position 49 (Thr-49) is a Phosphothreonine. Residues 61–74 (LAANSLLNKLIRQS) carry the Nuclear export signal motif. Positions 97–125 (KTFEELRLKEELLKGIYAMGFNRPSKIQE) match the Q motif motif. Positions 100-114 (EELRLKEELLKGIYA) match the Nuclear localization signal motif. The region spanning 130–300 (MMLAHPPQNL…ERIIPDPNVI (171 aa)) is the Helicase ATP-binding domain. 143-150 (SQSGTGKT) serves as a coordination point for ATP. Residues 247-250 (DEAD) carry the DEAD box motif. Residues 311 to 478 (NIRQYYVLCE…QLDPEDMDEI (168 aa)) form the Helicase C-terminal domain.

Belongs to the DEAD box helicase family. In terms of processing, phosphorylated on threonine residues. The phosphorylated form is found in the cytoplasm but not in the nucleus. As to expression, isoform 1 is expressed in germ cells. Isoform 2 is highly expressed in Leydig cells and weakly expressed in the pituitary and hypothalamus. Isoform 3 is weakly expressed only in germ cells.

The protein resides in the cytoplasm. The protein localises to the nucleus. It catalyses the reaction ATP + H2O = ADP + phosphate + H(+). Functionally, ATP-dependent RNA helicase. Required for mRNA export and translation regulation during spermatid development. This is ATP-dependent RNA helicase DDX25 (Ddx25) from Rattus norvegicus (Rat).